Reading from the N-terminus, the 366-residue chain is D-alanine--D-alanine ligase (366 aa).

Positions 144 to 347 constitute an ATP-grasp domain; sequence KRLLKDAGLK…YRELIENLIE (204 aa). 174–229 provides a ligand contact to ATP; it reads KEELGLPMFIKPANQGSSVGVHKVENEEQFYSAIKDAFQFDHKLLVEEAIVGREIE. Mg(2+) contacts are provided by Asp-301, Glu-314, and Asn-316.

It belongs to the D-alanine--D-alanine ligase family. It depends on Mg(2+) as a cofactor. Mn(2+) serves as cofactor.

The protein localises to the cytoplasm. It catalyses the reaction 2 D-alanine + ATP = D-alanyl-D-alanine + ADP + phosphate + H(+). It participates in cell wall biogenesis; peptidoglycan biosynthesis. In terms of biological role, cell wall formation. The polypeptide is D-alanine--D-alanine ligase (Oceanobacillus iheyensis (strain DSM 14371 / CIP 107618 / JCM 11309 / KCTC 3954 / HTE831)).